The following is a 321-amino-acid chain: Large ribosomal subunit protein uL10 (321 aa).

A disordered region spans residues 284-321; it reads SAGTAPTGGGAAAAAVEEKKEEPEEESDDDIGFSLFDD. Acidic residues predominate over residues 306 to 321; sequence PEEESDDDIGFSLFDD.

Belongs to the universal ribosomal protein uL10 family. P0 forms a pentameric complex by interaction with dimers of P1 and P2. Phosphorylated.

Ribosomal protein P0 is the functional equivalent of E.coli protein L10. This is Large ribosomal subunit protein uL10 from Oxybasis rubra (Red goosefoot).